A 422-amino-acid polypeptide reads, in one-letter code: Large ribosomal subunit protein uL4 (422 aa).

Alanine 2 is subject to N-acetylalanine. An N6-acetyllysine modification is found at lysine 14. Arginine 97 carries the omega-N-methylarginine modification. Lysine 106 is modified (N6-acetyllysine). A Glycyl lysine isopeptide (Lys-Gly) (interchain with G-Cter in SUMO2) cross-link involves residue lysine 239. Lysine 259 carries the post-translational modification N6-acetyllysine. Threonine 266 bears the Phosphothreonine mark. Serine 290 and serine 295 each carry phosphoserine. The residue at position 300 (arginine 300) is a Citrulline. Lysine 327 is covalently cross-linked (Glycyl lysine isopeptide (Lys-Gly) (interchain with G-Cter in SUMO2)). N6-acetyllysine occurs at positions 333 and 353. Residues 359-422 (EAKSDQKGVQ…PTSEEKKAAA (64 aa)) form a disordered region. An N6-acetyllysine; alternate modification is found at lysine 361. Residue lysine 361 forms a Glycyl lysine isopeptide (Lys-Gly) (interchain with G-Cter in SUMO1); alternate linkage. Serine 362 is modified (phosphoserine). Basic and acidic residues-rich tracts occupy residues 376-385 (NKEKKAVGDK) and 402-422 (PAAEKKPTEKKPTSEEKKAAA).

Belongs to the universal ribosomal protein uL4 family. In terms of assembly, component of the large ribosomal subunit. May bind IPO9 with low affinity. Interacts with RBM3. Citrullinated by PADI4.

It is found in the cytoplasm. Functionally, component of the large ribosomal subunit. The ribosome is a large ribonucleoprotein complex responsible for the synthesis of proteins in the cell. This Bos taurus (Bovine) protein is Large ribosomal subunit protein uL4 (RPL4).